The primary structure comprises 198 residues: Charged multivesicular body protein 2a homolog 2 (198 aa).

Residues 11–42 (KEVLRENQRNLNKSMREIDRERVALQNQEKKI) adopt a coiled-coil conformation.

It belongs to the SNF7 family. As to quaternary structure, probable core component of the endosomal sorting required for transport complex III (ESCRT-III). ESCRT-III components are thought to multimerize to form a flat lattice on the perimeter membrane of the endosome.

The protein resides in the endosome membrane. Probable core component of the endosomal sorting required for transport complex III (ESCRT-III) which is involved in multivesicular bodies (MVBs) formation and sorting of endosomal cargo proteins into MVBs. MVBs contain intraluminal vesicles (ILVs) that are generated by invagination and scission from the limiting membrane of the endosome and are delivered to lysosomes enabling degradation of membrane proteins. The chain is Charged multivesicular body protein 2a homolog 2 (chmp2a2) from Dictyostelium discoideum (Social amoeba).